We begin with the raw amino-acid sequence, 130 residues long: Large ribosomal subunit protein bL17 (130 aa).

Belongs to the bacterial ribosomal protein bL17 family. As to quaternary structure, part of the 50S ribosomal subunit. Contacts protein L32.

In Buchnera aphidicola subsp. Acyrthosiphon pisum (strain 5A), this protein is Large ribosomal subunit protein bL17.